A 2188-amino-acid chain; its full sequence is Tiggrin (2188 aa).

Positions 1 to 18 (MRALGGITLLLAVAICQG) are cleaved as a signal peptide. Coiled-coil stretches lie at residues 570-635 (SRLE…EHIK), 1009-1050 (LKNL…EIES), 1312-1343 (TFVEFEMELNQERDRLQKLANQYSVNVVEIEE), and 1613-1641 (KQQRWTIEELELRLNNDQKHLQDAVAQYH). A disordered region spans residues 1984-2188 (IFSKDRGDQP…FWEKLKEKLG (205 aa)). A compositionally biased stretch (basic and acidic residues) spans 1985 to 1998 (FSKDRGDQPPHTYD). A Cell attachment site motif is present at residues 1989–1991 (RGD). Residues 2000–2009 (SFVEGDEPGL) are compositionally biased toward acidic residues. A compositionally biased stretch (pro residues) spans 2016 to 2033 (PRPPNPAPIVSTPKPPLP). 2 stretches are compositionally biased toward low complexity: residues 2057–2077 (GSASASASGGPTGSSASASAS) and 2091–2101 (QQEVDLGQQQQ). The segment covering 2115 to 2139 (GQQTQVEDTDWNQQAEDLGQQQQVQ) has biased composition (polar residues). The span at 2148–2165 (QTQGHSSSSNSRSQPLQQ) shows a compositional bias: low complexity. Residues 2179–2188 (FWEKLKEKLG) are compositionally biased toward basic and acidic residues.

Post-translationally, O-glycosylation by pgant3 is required for proper secretion and localization to the basal cell layer interface during wing development. As to expression, in embryos, expressed in the apodemes (muscle attachment sites) of the major longitudinal muscles 4, 6, 7, 12 and 13 and the wide dorsal oblique muscles 9 and 10, in hemocytes, in fat body cells, in basement membranes surrounding the gut and in the commissures of the ventral nerve cord. Expressed in larval imaginal wing disk and in pupal wing. In adult flies, expressed in the jump muscle (at protein level).

It is found in the secreted. Its subcellular location is the extracellular space. The protein resides in the extracellular matrix. Its function is as follows. Functions as a ligand for integrin alpha-PS2/beta-PS. Required in larvae for proper muscle structure and function. Involved in the regulation of cell adhesion during wing development. This is Tiggrin from Drosophila melanogaster (Fruit fly).